A 76-amino-acid polypeptide reads, in one-letter code: Conotoxin Lt6.1 (76 aa).

The first 22 residues, 1 to 22, serve as a signal peptide directing secretion; it reads MKLTCVLIIAVLFLMDNQLITA. Positions 23-48 are excised as a propeptide; the sequence is DYPRDEQVYRAVRLRDAMQKSKGSGS. Disulfide bonds link Cys49/Cys62, Cys56/Cys67, and Cys61/Cys75.

Belongs to the conotoxin O1 superfamily. As to expression, expressed by the venom duct.

The protein localises to the secreted. This chain is Conotoxin Lt6.1, found in Conus litteratus (Lettered cone).